Reading from the N-terminus, the 319-residue chain is MASPAAGGVVIIGSGLIGRSWAMLFASGGFKVKLYDIEQQQITNALESIRKEMKSLEQSGSLKGSLGAEQQLSLISGCGNLAEAVEGAMHIQECVPENLELKKKIFAQLDRIVDDQVILSSSSSCLLPSKLFTGLAHVKQCIVAHPVNPPYYVPLVELVPHPETAPATMDRTYALMKKIRQTPVRVLKEIDGFVLNRLQYAIISEAWRLVEEGIVSPNDLDLVMSDGLGMRYAFIGPLETMHLNAEGMVSYCDRYSEGMKRVLKTFGPVPEFSGDTVEKVNQDMCMKVPDDPEHLAARRHWRDDCLMQLSKLKHQMQPQ.

Residue Ala-2 is modified to N-acetylalanine. Phosphoserine is present on Ser-3. Residues Leu-16–Ile-17, Asp-36, Glu-97, and Lys-102 each bind NAD(+).

This sequence belongs to the 3-hydroxyacyl-CoA dehydrogenase family. In terms of assembly, homodimer.

The protein resides in the cytoplasm. The enzyme catalyses L-gulonate + NAD(+) = 3-dehydro-L-gulonate + NADH + H(+). With respect to regulation, inhibited by malonate. Has high L-gulonate 3-dehydrogenase activity. It also exhibits low dehydrogenase activity toward L-3-hydroxybutyrate (HBA) and L-threonate. This is Lambda-crystallin homolog (Cryl1) from Rattus norvegicus (Rat).